The following is an 878-amino-acid chain: RNA-directed RNA polymerase (878 aa).

A GTP-binding site is contributed by 258–265 (GLPYVGRT). A RdRp catalytic domain is found at 397 to 597 (LVYADNIYIV…DKERLFCSAA (201 aa)). A disordered region spans residues 845–878 (GAGTSRPMGMEAPTRSKNAVKMAKRAQRQKESRQ).

Interacts with VP3 in the cytoplasm. May exist in multiple phosphorylated forms.

The protein localises to the virion. It catalyses the reaction RNA(n) + a ribonucleoside 5'-triphosphate = RNA(n+1) + diphosphate. In terms of biological role, RNA-dependent RNA polymerase which is found both free and covalently attached to the genomic RNA. May also contain guanylyl and methyl transferase activities. This is RNA-directed RNA polymerase (VP1) from Gallus gallus (Chicken).